The primary structure comprises 373 residues: Histidine protein methyltransferase 1 homolog (373 aa).

Positions 30-42 (SKESLVSERQKGT) are enriched in basic and acidic residues. Disordered stretches follow at residues 30 to 52 (SKES…STEQ) and 64 to 94 (KSER…HEEK). Polar residues predominate over residues 70–88 (APSQDPDSSFGAANSSSNL). Residues Ser-72 and Ser-77 each carry the phosphoserine modification. His-154 bears the Tele-methylhistidine mark. Residues 168–172 (IWECT), Gly-195, and 216–218 (QDY) each bind S-adenosyl-L-methionine. The Nuclear localization signal signature appears at 247–253 (PDVKRLR). S-adenosyl-L-methionine-binding positions include 269 to 271 (GEW) and Ser-294.

The protein belongs to the methyltransferase superfamily. METTL18 family. Interacts with GRWD1 and members of the heat shock protein 90 and 70 families; these proteins may possibly be methylation substrates for the enzyme. In terms of processing, monomethylated at His-154 through automethylation. Automethylation at His-154 positively regulates the methyltransferase activity toward RPL3. Probably methylated on other residues.

The protein resides in the cytoplasm. The protein localises to the cytosol. It is found in the nucleus. Its subcellular location is the nucleolus. The catalysed reaction is L-histidyl-[protein] + S-adenosyl-L-methionine = N(tele)-methyl-L-histidyl-[protein] + S-adenosyl-L-homocysteine + H(+). Functionally, protein-L-histidine N-tele-methyltransferase that specifically monomethylates RPL3, thereby regulating translation elongation. Histidine methylation of RPL3 regulates translation elongation by slowing ribosome traversal on tyrosine codons: slower elongation provides enough time for proper folding of synthesized proteins and prevents cellular aggregation of tyrosine-rich proteins. In Bos taurus (Bovine), this protein is Histidine protein methyltransferase 1 homolog (METTL18).